We begin with the raw amino-acid sequence, 122 residues long: Holo-[acyl-carrier-protein] synthase (122 aa).

Mg(2+) contacts are provided by aspartate 5 and glutamate 54.

The protein belongs to the P-Pant transferase superfamily. AcpS family. It depends on Mg(2+) as a cofactor.

The protein resides in the cytoplasm. It carries out the reaction apo-[ACP] + CoA = holo-[ACP] + adenosine 3',5'-bisphosphate + H(+). Functionally, transfers the 4'-phosphopantetheine moiety from coenzyme A to a Ser of acyl-carrier-protein. The chain is Holo-[acyl-carrier-protein] synthase from Aquifex aeolicus (strain VF5).